The sequence spans 3799 residues: Polyketide synthase GfsE (3799 aa).

A Ketosynthase family 3 (KS3) 1 domain is found at 33 to 459 (HEPIAIIGMS…GTNAHAILEE (427 aa)). Module regions lie at residues 33-1730 (HEPI…RSSA) and 1749-3494 (DEAI…RTDL). Catalysis depends on for beta-ketoacyl synthase 1 activity residues C206, H341, and H381. Residues 462 to 496 (AATGNPTEADTDQEPAASASPDRTTTLPAVPWPLS) are disordered. One can recognise a Malonyl-CoA:ACP transacylase (MAT) 1 domain in the interval 582-895 (FVFPGQGSQW…LGEAHAHGAD (314 aa)). The segment at 944–1069 (HPLFGAVVEV…GVLELEARPE (126 aa)) is N-terminal hotdog fold 1. Residues 944 to 1222 (HPLFGAVVEV…SRPVAEEQLG (279 aa)) form the PKS/mFAS DH 1 domain. H976 acts as the Proton acceptor; for dehydratase activity 1 in catalysis. Residues 1081 to 1222 (AEVVPVEGLY…SRPVAEEQLG (142 aa)) are C-terminal hotdog fold 1. The Proton donor; for dehydratase activity 1 role is filled by D1142. A Ketoreductase (KR) 1 domain is found at 1382 to 1554 (LLVTGASGVL…TSLSWGLWAE (173 aa)). In terms of domain architecture, Carrier 1 spans 1652-1730 (EAERAVLELV…ALATHIRSSA (79 aa)). O-(pantetheine 4'-phosphoryl)serine is present on S1690. Positions 1749 to 2174 (DEAIAIVGMA…GTNAHVILEQ (426 aa)) constitute a Ketosynthase family 3 (KS3) 2 domain. Catalysis depends on for beta-ketoacyl synthase 2 activity residues C1921, H2056, and H2096. The region spanning 2284 to 2604 (FVFPGQGSQW…VSLAKVHTHG (321 aa)) is the Malonyl-CoA:ACP transacylase (MAT) 2 domain. The tract at residues 2656-2781 (HPLLTGVVDL…GTLAVDADHD (126 aa)) is N-terminal hotdog fold 2. One can recognise a PKS/mFAS DH 2 domain in the interval 2656–2936 (HPLLTGVVDL…TRPVTAAQFA (281 aa)). H2688 serves as the catalytic Proton acceptor; for dehydratase activity 2. Residues 2794–2936 (ADPVDLTEVY…TRPVTAAQFA (143 aa)) are C-terminal hotdog fold 2. Catalysis depends on D2855, which acts as the Proton donor; for dehydratase activity 2. Residues 3142–3314 (LLVTGASGVL…TALSWGLWAE (173 aa)) form the Ketoreductase (KR) 2 domain. Residues 3419-3494 (AALLDLVGAQ…ALAAQLRTDL (76 aa)) form the Carrier 2 domain. An O-(pantetheine 4'-phosphoryl)serine modification is found at S3454.

Pantetheine 4'-phosphate is required as a cofactor.

It functions in the pathway antibiotic biosynthesis. Fifth protein in the synthesis of the 16-membered macrolide antibiotics FD-891 and FD-892. Composed of 2 modules. Modifies the product of GfsD by multiple rounds of addition of methylmalonyl-CoA and other modifications to help generate the final products. The chain is Polyketide synthase GfsE from Streptomyces halstedii.